Here is a 219-residue protein sequence, read N- to C-terminus: Probable nicotinate-nucleotide adenylyltransferase (219 aa).

The protein belongs to the NadD family.

The catalysed reaction is nicotinate beta-D-ribonucleotide + ATP + H(+) = deamido-NAD(+) + diphosphate. It participates in cofactor biosynthesis; NAD(+) biosynthesis; deamido-NAD(+) from nicotinate D-ribonucleotide: step 1/1. In terms of biological role, catalyzes the reversible adenylation of nicotinate mononucleotide (NaMN) to nicotinic acid adenine dinucleotide (NaAD). This is Probable nicotinate-nucleotide adenylyltransferase from Cronobacter sakazakii (strain ATCC BAA-894) (Enterobacter sakazakii).